The following is a 289-amino-acid chain: ATP synthase subunit a (289 aa).

Transmembrane regions (helical) follow at residues 43–63 (AFHV…VLLF), 103–123 (VIAP…AVDL), 160–180 (FSVF…GGFI), 193–213 (IFVQ…TLIA), 232–252 (VFIL…GLGV), and 259–279 (AVFH…LTIV).

The protein belongs to the ATPase A chain family. As to quaternary structure, F-type ATPases have 2 components, CF(1) - the catalytic core - and CF(0) - the membrane proton channel. CF(1) has five subunits: alpha(3), beta(3), gamma(1), delta(1), epsilon(1). CF(0) has three main subunits: a(1), b(2) and c(9-12). The alpha and beta chains form an alternating ring which encloses part of the gamma chain. CF(1) is attached to CF(0) by a central stalk formed by the gamma and epsilon chains, while a peripheral stalk is formed by the delta and b chains.

The protein localises to the cell inner membrane. Functionally, key component of the proton channel; it plays a direct role in the translocation of protons across the membrane. This Pseudomonas fluorescens (strain Pf0-1) protein is ATP synthase subunit a.